The sequence spans 703 residues: tRNA 5-methylaminomethyl-2-thiouridine biosynthesis bifunctional protein MnmC (703 aa).

The tRNA (mnm(5)s(2)U34)-methyltransferase stretch occupies residues 1-281 (MTAKPQKSCQ…KPAALVAKDH (281 aa)). The tract at residues 286 to 703 (VGGGLASANL…LRKLLKGKAL (418 aa)) is FAD-dependent cmnm(5)s(2)U34 oxidoreductase.

In the N-terminal section; belongs to the methyltransferase superfamily. tRNA (mnm(5)s(2)U34)-methyltransferase family. It in the C-terminal section; belongs to the DAO family. Requires FAD as cofactor.

It localises to the cytoplasm. It catalyses the reaction 5-aminomethyl-2-thiouridine(34) in tRNA + S-adenosyl-L-methionine = 5-methylaminomethyl-2-thiouridine(34) in tRNA + S-adenosyl-L-homocysteine + H(+). Its function is as follows. Catalyzes the last two steps in the biosynthesis of 5-methylaminomethyl-2-thiouridine (mnm(5)s(2)U) at the wobble position (U34) in tRNA. Catalyzes the FAD-dependent demodification of cmnm(5)s(2)U34 to nm(5)s(2)U34, followed by the transfer of a methyl group from S-adenosyl-L-methionine to nm(5)s(2)U34, to form mnm(5)s(2)U34. This Shewanella sp. (strain MR-7) protein is tRNA 5-methylaminomethyl-2-thiouridine biosynthesis bifunctional protein MnmC.